The primary structure comprises 289 residues: MSGFSSEERAAPFTLEYRVFLKNEKGQYISPFHDIPIYADKEVFHMVVEVPRWSNAKMEIATKDPLNPIKQDVKKGKLRYVANLFPYKGYIWNYGAIPQTWEDPGHNDKHTGCCGDNDPIDVCEIGSKVCARGEIIRVKVLGILAMIDEGETDWKVIAINVEDPDAANYNDINDVKRLKPGYLEATVDWFRRYKVPDGKPENEFAFNAEFKDKNFAIDIIESTHDYWRALVTKKTDGKGISCMNTTVSESPFQCDPDAAKAIVDALPPPCESACTIPTDVDKWFHHQKN.

Ser2 carries the post-translational modification N-acetylserine. Lys57 is subject to N6-acetyllysine. Residues Asp116, Asp121, and Asp153 each coordinate Mg(2+). Ser250 bears the Phosphoserine mark.

This sequence belongs to the PPase family. As to quaternary structure, homodimer. The cofactor is Mg(2+). The N-terminus is blocked. As to expression, highest levels are found in retinal rod outer segments.

The protein resides in the cytoplasm. It catalyses the reaction diphosphate + H2O = 2 phosphate + H(+). This Bos taurus (Bovine) protein is Inorganic pyrophosphatase (PPA1).